A 533-amino-acid polypeptide reads, in one-letter code: L-aspartate oxidase 1 (533 aa).

FAD is bound by residues 10–13 (SGLA), Lys-32, 39–46 (ASDWAQGG), and Asp-214. Arg-281 (proton donor/acceptor) is an active-site residue. Residues Glu-366 and 382-383 (SL) each bind FAD.

It belongs to the FAD-dependent oxidoreductase 2 family. NadB subfamily. FAD is required as a cofactor.

The protein resides in the cytoplasm. It catalyses the reaction L-aspartate + O2 = iminosuccinate + H2O2. It participates in cofactor biosynthesis; NAD(+) biosynthesis; iminoaspartate from L-aspartate (oxidase route): step 1/1. Its function is as follows. Catalyzes the oxidation of L-aspartate to iminoaspartate, the first step in the de novo biosynthesis of NAD(+). This chain is L-aspartate oxidase 1 (nadB1), found in Ralstonia nicotianae (strain ATCC BAA-1114 / GMI1000) (Ralstonia solanacearum).